An 832-amino-acid chain; its full sequence is Cadherin-like protein 26 (832 aa).

Positions 1-27 (MAMRSGRHPSLLLLLVLLLWLLQVSII) are cleaved as a signal peptide. Residues 28–614 (DSVQQETDDL…ELADAEVGLH (587 aa)) are Extracellular-facing. 4 Cadherin domains span residues 35 to 165 (DDLT…APQF), 166 to 275 (PEKE…RPAF), 276 to 396 (TQEN…PPAF), and 397 to 500 (HPQS…VPTL). 4 N-linked (GlcNAc...) asparagine glycosylation sites follow: Asn81, Asn85, Asn171, and Asn177. Asn462 carries N-linked (GlcNAc...) asparagine glycosylation. Residues 615–635 (VGALFPVCAAFVALAVALLFL) traverse the membrane as a helical segment. Residues 636–832 (LRCYFVLEPK…EIYSESGVPS (197 aa)) are Cytoplasmic-facing. The segment at 813-832 (SLGSKATPFEEIYSESGVPS) is disordered.

In terms of assembly, homodimer. Component of a cadherin:catenin adhesion complex composed of at least of CDH26, beta-catenin/CTNNB1, alpha-catenin/CTNNA1 and p120 catenin/CTNND1. N-glycosylated. In terms of tissue distribution, expressed by epithelial cells of gastrointestinal tissue.

It localises to the cell membrane. Its function is as follows. Cadherins are calcium-dependent cell adhesion proteins. They preferentially interact with themselves in a homophilic manner in connecting cells; cadherins may thus contribute to the sorting of heterogeneous cell types. Ligand for integrins alpha-E/beta-7, ITGAE:ITGAB7, alpha-4/beta-7, ITGA4:ITGAB7 and alpha-4/beta-1, ITGA4:ITGAB1 through which modulates CD4(+) T cells activation. The polypeptide is Cadherin-like protein 26 (CDH26) (Homo sapiens (Human)).